A 56-amino-acid polypeptide reads, in one-letter code: Preprotein translocase subunit SecG (56 aa).

The Cytoplasmic segment spans residues 1–30 (MARKDKKTLPASGAGIVRYFNDDTAGVKLS). The chain crosses the membrane as a helical span at residues 31 to 52 (PKQVVIGTIIVALICIALRFTT). Topologically, residues 53 to 56 (SVGY) are extracellular.

The protein belongs to the SEC61-beta family. Component of the protein translocase complex. Heterotrimer consisting of alpha (SecY), beta (SecG) and gamma (SecE) subunits. Can form oligomers of the heterotrimer.

The protein localises to the cell membrane. Involved in protein export. The function of the beta subunit is unknown, but it may be involved in stabilization of the trimeric complex. The protein is Preprotein translocase subunit SecG of Methanosphaera stadtmanae (strain ATCC 43021 / DSM 3091 / JCM 11832 / MCB-3).